The chain runs to 241 residues: Probable porphobilinogen deaminase (241 aa).

The protein belongs to the HMBS family.

The enzyme catalyses 4 porphobilinogen + H2O = hydroxymethylbilane + 4 NH4(+). It participates in porphyrin-containing compound metabolism; protoporphyrin-IX biosynthesis; coproporphyrinogen-III from 5-aminolevulinate: step 2/4. Functionally, tetrapolymerization of the monopyrrole PBG into the hydroxymethylbilane pre-uroporphyrinogen in several discrete steps. The chain is Probable porphobilinogen deaminase (hemC) from Chlamydia trachomatis serovar D (strain ATCC VR-885 / DSM 19411 / UW-3/Cx).